Consider the following 154-residue polypeptide: Ribosome maturation factor RimP (154 aa).

This sequence belongs to the RimP family.

The protein localises to the cytoplasm. In terms of biological role, required for maturation of 30S ribosomal subunits. In Natranaerobius thermophilus (strain ATCC BAA-1301 / DSM 18059 / JW/NM-WN-LF), this protein is Ribosome maturation factor RimP.